We begin with the raw amino-acid sequence, 410 residues long: Arginine deiminase (410 aa).

Cys-399 serves as the catalytic Amidino-cysteine intermediate.

This sequence belongs to the arginine deiminase family.

Its subcellular location is the cytoplasm. The enzyme catalyses L-arginine + H2O = L-citrulline + NH4(+). Its pathway is amino-acid degradation; L-arginine degradation via ADI pathway; carbamoyl phosphate from L-arginine: step 1/2. The sequence is that of Arginine deiminase from Treponema denticola (strain ATCC 35405 / DSM 14222 / CIP 103919 / JCM 8153 / KCTC 15104).